The sequence spans 322 residues: uncharacterized protein (322 aa).

Residues 205 to 286 (QEIKNAHAAL…LKKAISEAVQ (82 aa)) adopt a coiled-coil conformation. 2 stretches are compositionally biased toward basic and acidic residues: residues 254-281 (EKEE…KKAI) and 290-299 (DRIEAIEKSR). The interval 254-322 (EKEEELNKKD…VQKSIWSGLF (69 aa)) is disordered. The segment covering 310 to 322 (SEQVQKSIWSGLF) has biased composition (polar residues).

This sequence to B.subtilis XkdF.

This is an uncharacterized protein from Bacillus subtilis (strain 168).